Reading from the N-terminus, the 80-residue chain is FXYD domain-containing ion transport regulator 7 (80 aa).

Residues 1-22 (MATPTQSPTNVPEETDPFFYDY) are Extracellular-facing. O-linked (GlcNAc) threonine glycans are attached at residues threonine 3, threonine 5, and threonine 9. A helical membrane pass occupies residues 23 to 45 (ATVQTVGMTLATIMFVLGIIIIL). The Cytoplasmic portion of the chain corresponds to 46–80 (SKKVKCRKADSRSESPTCKSCKSELPSSAPGGGGV). Positions 55–80 (DSRSESPTCKSCKSELPSSAPGGGGV) are disordered. Phosphoserine is present on serine 73.

Belongs to the FXYD family. In terms of assembly, regulatory subunit of the sodium/potassium-transporting ATPase which is composed of a catalytic alpha subunit, a non-catalytic beta subunit and an additional regulatory subunit. The regulatory subunit, a member of the FXYD protein family, modulates the enzymatic activity in a tissue- and isoform-specific way by changing affinities of the Na+/K+-ATPase toward Na(+), K(+) or ATP. O-glycosylated; required for stabilization and translocation to the plasma membrane.

It localises to the cell membrane. In terms of biological role, associates with and regulates the activity of the sodium/potassium-transporting ATPase (NKA) which catalyzes the hydrolysis of ATP coupled with the exchange of Na(+) and K(+) ions across the plasma membrane. Reduces the apparent affinity for external K(+), an effect that depends on the presence of external Na(+) and voltage. Increases the apparent affinity for intracellular Na(+). This Mus musculus (Mouse) protein is FXYD domain-containing ion transport regulator 7 (Fxyd7).